The chain runs to 516 residues: Histidine ammonia-lyase 1 (516 aa).

Positions 147–149 (SSG) form a cross-link, 5-imidazolinone (Ser-Gly). A 2,3-didehydroalanine (Ser) modification is found at Ser148.

The protein belongs to the PAL/histidase family. In terms of processing, contains an active site 4-methylidene-imidazol-5-one (MIO), which is formed autocatalytically by cyclization and dehydration of residues Ser-Ser-Gly.

It localises to the cytoplasm. It catalyses the reaction L-histidine = trans-urocanate + NH4(+). The protein operates within amino-acid degradation; L-histidine degradation into L-glutamate; N-formimidoyl-L-glutamate from L-histidine: step 1/3. The polypeptide is Histidine ammonia-lyase 1 (hutH1) (Fusobacterium nucleatum subsp. nucleatum (strain ATCC 25586 / DSM 15643 / BCRC 10681 / CIP 101130 / JCM 8532 / KCTC 2640 / LMG 13131 / VPI 4355)).